The chain runs to 67 residues: Conotoxin Cl14c (67 aa).

Residues methionine 1 to glycine 20 form the signal peptide. The propeptide occupies phenylalanine 21–glutamine 48.

The protein belongs to the conotoxin L superfamily. In terms of processing, contains 2 disulfide bonds. Expressed by the venom duct.

The protein resides in the secreted. The protein is Conotoxin Cl14c of Californiconus californicus (California cone).